A 627-amino-acid chain; its full sequence is Membrane protein insertase YidC (627 aa).

Transmembrane regions (helical) follow at residues 3 to 23, 376 to 396, 450 to 470, 502 to 522, 534 to 554, and 558 to 578; these read KNTV…SWLN, WGLI…PLAY, LPML…PTTI, FYGN…ILYI, EGMA…LFFF, and ASGL…QYMS.

Belongs to the OXA1/ALB3/YidC family. Type 1 subfamily. Interacts with the Sec translocase complex via SecD. Specifically interacts with transmembrane segments of nascent integral membrane proteins during membrane integration.

Its subcellular location is the cell inner membrane. In terms of biological role, required for the insertion and/or proper folding and/or complex formation of integral membrane proteins into the membrane. Involved in integration of membrane proteins that insert both dependently and independently of the Sec translocase complex, as well as at least some lipoproteins. Aids folding of multispanning membrane proteins. The chain is Membrane protein insertase YidC from Porphyromonas gingivalis (strain ATCC 33277 / DSM 20709 / CIP 103683 / JCM 12257 / NCTC 11834 / 2561).